We begin with the raw amino-acid sequence, 198 residues long: Holliday junction resolvase RecU (198 aa).

Residues 1–21 (MVNYPHKLSSQKRQPSLSQPK) form a disordered region. Over residues 11–21 (QKRQPSLSQPK) the composition is skewed to polar residues. Positions 81, 83, 96, and 115 each coordinate Mg(2+).

This sequence belongs to the RecU family. It depends on Mg(2+) as a cofactor.

It localises to the cytoplasm. The enzyme catalyses Endonucleolytic cleavage at a junction such as a reciprocal single-stranded crossover between two homologous DNA duplexes (Holliday junction).. Endonuclease that resolves Holliday junction intermediates in genetic recombination. Cleaves mobile four-strand junctions by introducing symmetrical nicks in paired strands. Promotes annealing of linear ssDNA with homologous dsDNA. Required for DNA repair, homologous recombination and chromosome segregation. The protein is Holliday junction resolvase RecU of Streptococcus pneumoniae (strain Taiwan19F-14).